The sequence spans 361 residues: Spermatogenesis-associated protein 17 (361 aa).

IQ domains are found at residues 32–61, 55–84, and 91–120; these read ENDA…IVTI, LNRI…VAYY, and YNAM…LKEY.

It is found in the cytoplasm. The chain is Spermatogenesis-associated protein 17 (SPATA17) from Homo sapiens (Human).